The chain runs to 309 residues: tRNA dimethylallyltransferase (309 aa).

Glycine 9–threonine 16 lines the ATP pocket. Threonine 11 to threonine 16 serves as a coordination point for substrate. The tract at residues aspartate 34–glutamine 37 is interaction with substrate tRNA.

The protein belongs to the IPP transferase family. Monomer. It depends on Mg(2+) as a cofactor.

It catalyses the reaction adenosine(37) in tRNA + dimethylallyl diphosphate = N(6)-dimethylallyladenosine(37) in tRNA + diphosphate. Catalyzes the transfer of a dimethylallyl group onto the adenine at position 37 in tRNAs that read codons beginning with uridine, leading to the formation of N6-(dimethylallyl)adenosine (i(6)A). The protein is tRNA dimethylallyltransferase of Clostridium kluyveri (strain NBRC 12016).